The primary structure comprises 279 residues: Complement component 1 Q subcomponent-binding protein, mitochondrial (279 aa).

Residues 1–71 (MLPLLRCVPR…PVPCACGCGA (71 aa)) constitute a mitochondrion transit peptide. The segment at 74–91 (TEGDKAFVEFLTDEIKEE) is C1q binding. 2 positions are modified to N6-acetyllysine: lysine 89 and lysine 92. The tract at residues 134-162 (NNSIPPTFDGEEEPSQGQKAEEQEPELTS) is disordered. The interval 166–210 (FVVEVTKTDGKKTLVLDCHYPEDEIGHEDEAESDIFSIKEVSFQT) is interaction with MAVS. Tyrosine 185 carries the phosphotyrosine modification. Phosphoserine is present on residues serine 198 and serine 202. At threonine 211 the chain carries Phosphothreonine.

It belongs to the MAM33 family. Homotrimer; three monomers form a donut-shaped structure with an unusually asymmetric charge distribution on the surface. Interacts with CDK13, HRK, VTN, NFYB, ADRA1B, FOXC1, DDX21, DDX50, NCL, SRSF1 and SRSF9. Interacts with CD93; the association may represent a cell surface C1q receptor. Interacts with KRT1; the association represents a cell surface kininogen receptor. Interacts with CD209; the interaction is indicative for a C1q:C1QBP:CD209 signaling complex. Interacts with FBL and RRP1; the respective interactions with C1QBP are competitive. Probably associates with the mitoribosome. Interacts with MAVS; the interaction occurs upon viral transfection. Interacts with PPIF. Interacts with U2AF1L4. Interacts with PLEKHN1. Interacts with VGF-derived peptide TLQP-21. Interacts with MRE11 and RAD50; forming the MRC (MRE11-RAD50-C1QBP) complex that inhibits the activity of MRE11. In terms of tissue distribution, ubiquitous.

The protein localises to the mitochondrion matrix. Its subcellular location is the nucleus. It is found in the cell membrane. The protein resides in the secreted. It localises to the cytoplasm. The protein localises to the nucleolus. In terms of biological role, multifunctional and multicompartmental protein involved in inflammation and infection processes, ribosome biogenesis, protein synthesis in mitochondria, regulation of apoptosis, transcriptional regulation and pre-mRNA splicing. At the cell surface is thought to act as an endothelial receptor for plasma proteins of the complement and kallikrein-kinin cascades. Putative receptor for C1q; specifically binds to the globular 'heads' of C1q thus inhibiting C1; may perform the receptor function through a complex with C1qR/CD93. In complex with cytokeratin-1/KRT1 is a high affinity receptor for kininogen-1/HMWK. Can also bind other plasma proteins, such as coagulation factor XII leading to its autoactivation. May function to bind initially fluid kininogen-1 to the cell membrane. The secreted form may enhance both extrinsic and intrinsic coagulation pathways. It is postulated that the cell surface form requires docking with transmembrane proteins for downstream signaling which might be specific for a cell-type or response. By acting as C1q receptor is involved in chemotaxis of immature dendritic cells and neutrophils and is proposed to signal through CD209/DC-SIGN on immature dendritic cells, through integrin alpha-4/beta-1 during trophoblast invasion of the decidua, and through integrin beta-1 during endothelial cell adhesion and spreading. Signaling involved in inhibition of innate immune response is implicating the PI3K-AKT/PKB pathway. Required for protein synthesis in mitochondria. In mitochondrial translation may be involved in formation of functional 55S mitoribosomes; the function seems to involve its RNA-binding activity. Acts as a RNA modification reader, which specifically recognizes and binds mitochondrial RNAs modified by C5-methylcytosine (m5C) in response to stress, and promotes recruitment of the mitochondrial degradosome complex, leading to their degradation. May be involved in the nucleolar ribosome maturation process; the function may involve the exchange of FBL for RRP1 in the association with pre-ribosome particles. Involved in regulation of RNA splicing by inhibiting the RNA-binding capacity of SRSF1 and its phosphorylation. Is required for the nuclear translocation of splicing factor U2AF1L4. Involved in regulation of CDKN2A- and HRK-mediated apoptosis. Stabilizes mitochondrial CDKN2A isoform smARF. May be involved in regulation of FOXC1 transcriptional activity and NFY/CCAAT-binding factor complex-mediated transcription. May play a role in antibacterial defense as it can bind to cell surface hyaluronan and inhibit Streptococcus pneumoniae hyaluronate lyase. May be involved in modulation of the immune response; ligation by HCV core protein is resulting in suppression of interleukin-12 production in monocyte-derived dendritic cells. Involved in regulation of antiviral response by inhibiting RIGI- and IFIH1-mediated signaling pathways probably involving its association with MAVS after viral infection. Acts as a regulator of DNA repair via homologous recombination by inhibiting the activity of MRE11: interacts with unphosphorylated MRE11 and RAD50 in absence of DNA damage, preventing formation and activity of the MRN complex. Following DNA damage, dissociates from phosphorylated MRE11, allowing formation of the MRN complex. The chain is Complement component 1 Q subcomponent-binding protein, mitochondrial (C1qbp) from Rattus norvegicus (Rat).